The following is a 261-amino-acid chain: 4-hydroxy-tetrahydrodipicolinate reductase (261 aa).

9–14 contributes to the NAD(+) binding site; the sequence is GCLGRM. Arg36 serves as a coordination point for NADP(+). NAD(+)-binding positions include 97-99 and 118-121; these read GTT and SANM. His151 (proton donor/acceptor) is an active-site residue. A (S)-2,3,4,5-tetrahydrodipicolinate-binding site is contributed by His152. Lys155 acts as the Proton donor in catalysis. 161–162 lines the (S)-2,3,4,5-tetrahydrodipicolinate pocket; it reads GT.

This sequence belongs to the DapB family.

It is found in the cytoplasm. The catalysed reaction is (S)-2,3,4,5-tetrahydrodipicolinate + NAD(+) + H2O = (2S,4S)-4-hydroxy-2,3,4,5-tetrahydrodipicolinate + NADH + H(+). It catalyses the reaction (S)-2,3,4,5-tetrahydrodipicolinate + NADP(+) + H2O = (2S,4S)-4-hydroxy-2,3,4,5-tetrahydrodipicolinate + NADPH + H(+). Its pathway is amino-acid biosynthesis; L-lysine biosynthesis via DAP pathway; (S)-tetrahydrodipicolinate from L-aspartate: step 4/4. In terms of biological role, catalyzes the conversion of 4-hydroxy-tetrahydrodipicolinate (HTPA) to tetrahydrodipicolinate. The polypeptide is 4-hydroxy-tetrahydrodipicolinate reductase (Wolbachia pipientis wMel).